Consider the following 177-residue polypeptide: Large ribosomal subunit protein uL6 (177 aa).

The protein belongs to the universal ribosomal protein uL6 family. As to quaternary structure, part of the 50S ribosomal subunit.

In terms of biological role, this protein binds to the 23S rRNA, and is important in its secondary structure. It is located near the subunit interface in the base of the L7/L12 stalk, and near the tRNA binding site of the peptidyltransferase center. The protein is Large ribosomal subunit protein uL6 of Klebsiella pneumoniae (strain 342).